Consider the following 438-residue polypeptide: Trigger factor (438 aa).

Positions aspartate 160–proline 245 constitute a PPIase FKBP-type domain.

This sequence belongs to the FKBP-type PPIase family. Tig subfamily.

Its subcellular location is the cytoplasm. It catalyses the reaction [protein]-peptidylproline (omega=180) = [protein]-peptidylproline (omega=0). In terms of biological role, involved in protein export. Acts as a chaperone by maintaining the newly synthesized protein in an open conformation. Functions as a peptidyl-prolyl cis-trans isomerase. This Francisella tularensis subsp. tularensis (strain FSC 198) protein is Trigger factor.